We begin with the raw amino-acid sequence, 171 residues long: uncharacterized protein (171 aa).

Transmembrane regions (helical) follow at residues 13-35 and 50-72; these read VGAS…IATA and ATVL…AYVV.

Its subcellular location is the cell membrane. This is an uncharacterized protein from Treponema pallidum (strain Nichols).